Here is a 202-residue protein sequence, read N- to C-terminus: MPEETQVHVVRHGEVHNPTGILYGRLPGFHLSATGAAQAAAVADALADRDIVAVIASPLQRAQETAAPIAARHDLAVETDPDLIESANFFXGRRVGPGDGAWRDPRVWWQLRNPFTPSWGEPYVDIAARMTTAVDKARVRGAGHEVVCVSHQLPVWTLRLYLTGKRLWHDPRRRDCALASVTSLIYDGDRLVDVVYSQPAAL.

An Isoglutamyl lysine isopeptide (Lys-Gln) (interchain with Q-Cter in protein Pup) cross-link involves residue Lys136.

This is an uncharacterized protein from Mycobacterium tuberculosis (strain CDC 1551 / Oshkosh).